Here is a 347-residue protein sequence, read N- to C-terminus: NADH-ubiquinone oxidoreductase chain 2 (347 aa).

Helical transmembrane passes span 3 to 23 (PIIF…VMIS), 25 to 45 (HWLR…PIMM), 66 to 86 (ASML…QWTV), 96 to 116 (MLMT…FWVP), 122 to 142 (IPLS…MSVL), 145 to 165 (ILPS…IMIG), 178 to 198 (IMAY…PYNP), 200 to 220 (MMLL…LLFM), 237 to 257 (MPIM…LPPL), 274 to 294 (NSII…YFYM), and 325 to 345 (LLPT…ILSI).

Belongs to the complex I subunit 2 family. As to quaternary structure, core subunit of respiratory chain NADH dehydrogenase (Complex I) which is composed of 45 different subunits. Interacts with TMEM242.

Its subcellular location is the mitochondrion inner membrane. It catalyses the reaction a ubiquinone + NADH + 5 H(+)(in) = a ubiquinol + NAD(+) + 4 H(+)(out). Functionally, core subunit of the mitochondrial membrane respiratory chain NADH dehydrogenase (Complex I) which catalyzes electron transfer from NADH through the respiratory chain, using ubiquinone as an electron acceptor. Essential for the catalytic activity and assembly of complex I. The polypeptide is NADH-ubiquinone oxidoreductase chain 2 (Capra hircus (Goat)).